Consider the following 199-residue polypeptide: Phycocyanobilin lyase CpcT (199 aa).

Belongs to the CpcT/CpeT biliprotein lyase family.

Catalyzes the site-selective attachment of phycocyanobilin (PCB) to 'Cys-154' of C-phycocyanin subunit beta (CpcB) and to 'Cys-153' of phycoerythrocyanin subunit beta (PecB). Does not have chromophore lyase activity for ApcA1, ApcA2, ApcB, ApcD, ApcF or PecA. This Nostoc sp. (strain PCC 7120 / SAG 25.82 / UTEX 2576) protein is Phycocyanobilin lyase CpcT (cpcT1).